Consider the following 177-residue polypeptide: Large ribosomal subunit protein uL6 (177 aa).

This sequence belongs to the universal ribosomal protein uL6 family. In terms of assembly, part of the 50S ribosomal subunit.

Functionally, this protein binds to the 23S rRNA, and is important in its secondary structure. It is located near the subunit interface in the base of the L7/L12 stalk, and near the tRNA binding site of the peptidyltransferase center. This chain is Large ribosomal subunit protein uL6, found in Nitrobacter winogradskyi (strain ATCC 25391 / DSM 10237 / CIP 104748 / NCIMB 11846 / Nb-255).